A 381-amino-acid chain; its full sequence is E3 ubiquitin-protein ligase ATL15 (381 aa).

Positions 1-23 are cleaved as a signal peptide; sequence MVVMSRVSFYSSFLLLLLEVVVA. A helical transmembrane segment spans residues 40-60; it reads AIIMIVLVSVFFALGCISVYM. Residues 118-160 form an RING-type; atypical zinc finger; it reads CPVCLNEFEDDETLRLIPQCCHVFHPGCIDAWLRSQTTCPLCR.

The protein belongs to the RING-type zinc finger family. ATL subfamily.

It localises to the membrane. The catalysed reaction is S-ubiquitinyl-[E2 ubiquitin-conjugating enzyme]-L-cysteine + [acceptor protein]-L-lysine = [E2 ubiquitin-conjugating enzyme]-L-cysteine + N(6)-ubiquitinyl-[acceptor protein]-L-lysine.. It participates in protein modification; protein ubiquitination. Its function is as follows. E3 ubiquitin-protein ligase able to catalyze polyubiquitination with ubiquitin-conjugating enzyme E2 UBC8, UBC10, UBC11, UBC28 and UBC29 in vitro. This is E3 ubiquitin-protein ligase ATL15 (ATL15) from Arabidopsis thaliana (Mouse-ear cress).